We begin with the raw amino-acid sequence, 292 residues long: 4-hydroxybenzoate octaprenyltransferase (292 aa).

The next 8 helical transmembrane spans lie at 20–40, 43–63, 94–114, 135–155, 160–180, 209–229, 234–254, and 266–286; these read IGIL…ADGM, PMIL…GCAI, LLIA…LNLL, FFAM…PMAF, GTVP…VIAY, VAGI…AGIL, IWFY…YGMI, and FLHN…DTLF.

It belongs to the UbiA prenyltransferase family. Requires Mg(2+) as cofactor.

The protein resides in the cell inner membrane. It catalyses the reaction all-trans-octaprenyl diphosphate + 4-hydroxybenzoate = 4-hydroxy-3-(all-trans-octaprenyl)benzoate + diphosphate. Its pathway is cofactor biosynthesis; ubiquinone biosynthesis. In terms of biological role, catalyzes the prenylation of para-hydroxybenzoate (PHB) with an all-trans polyprenyl group. Mediates the second step in the final reaction sequence of ubiquinone-8 (UQ-8) biosynthesis, which is the condensation of the polyisoprenoid side chain with PHB, generating the first membrane-bound Q intermediate 3-octaprenyl-4-hydroxybenzoate. This Nitrosomonas europaea (strain ATCC 19718 / CIP 103999 / KCTC 2705 / NBRC 14298) protein is 4-hydroxybenzoate octaprenyltransferase.